The sequence spans 240 residues: Hairy and enhancer of split-related protein HELT (240 aa).

The bHLH domain maps to 10–65; it reads RTPVSHKVIEKRRRDRINRCLNELGKTVPMALAKQSSGKLEKAEILEMTVQYLRAL. At Lys-48 the chain carries N6-acetyllysine. The Orange domain occupies 86–121; that stretch reads FHYGYHECMKNLVHYLTTVERMETKDTKYARILAFL.

This sequence belongs to the HEY family. In terms of assembly, self-associates. Interacts with HES5 and HEY2. As to expression, expressed in heart and testis.

The protein localises to the nucleus. Functionally, transcriptional repressor which binds preferentially to the canonical E box sequence 5'-CACGCG-3'. Required for the development of GABAergic neurons. The sequence is that of Hairy and enhancer of split-related protein HELT (Helt) from Mus musculus (Mouse).